Consider the following 460-residue polypeptide: Argininosuccinate lyase (460 aa).

It belongs to the lyase 1 family. Argininosuccinate lyase subfamily.

It is found in the cytoplasm. It carries out the reaction 2-(N(omega)-L-arginino)succinate = fumarate + L-arginine. It functions in the pathway amino-acid biosynthesis; L-arginine biosynthesis; L-arginine from L-ornithine and carbamoyl phosphate: step 3/3. The protein is Argininosuccinate lyase of Staphylococcus haemolyticus (strain JCSC1435).